A 444-amino-acid chain; its full sequence is MNAAKVLDDLKRRFPNEPEYHQAVEEVLSTIEEEYNKHPEFDKANLIERLCIPDRVFQFRVTWMDDKGNIQTNMGYRVQHNNAIGPYKGGIRFHASVNLSILKFLAFEQTFKNSLTTLPMGGGKGGSDFSPRGKSNAEVMRFVQAFMLELWRHIGPETDVPAGDIGVGGREVGFMFGMYKKLAHEFTGTFTGKGREFGGSLIRPEATGYGNIYFLMEMLKTKGTDLKGKVCLVSGSGNVAQYTIEKVIELGGKVVTCSDSDGYIYDPDGIDREKLDYIMELKNLYRGRIREYAEKYGCKYVEGAKPWGEKCDIALPSATQNELNGDHARQLVANGCIAVSEGANMPSTPEAVRVFQDAKILYAPGKAANAGGVSVSGLEMTQNSIKLSWSAEEVDEKLKSIMKNIHEACVQYGTEADGYVNYVKGANVAGFMKVAKAMMAQGIV.

K124 is an active-site residue.

The protein belongs to the Glu/Leu/Phe/Val dehydrogenases family. As to quaternary structure, homohexamer.

The catalysed reaction is L-glutamate + NAD(+) + H2O = 2-oxoglutarate + NH4(+) + NADH + H(+). It carries out the reaction L-glutamate + NADP(+) + H2O = 2-oxoglutarate + NH4(+) + NADPH + H(+). The polypeptide is Glutamate dehydrogenase (gdhA) (Bacteroides thetaiotaomicron (strain ATCC 29148 / DSM 2079 / JCM 5827 / CCUG 10774 / NCTC 10582 / VPI-5482 / E50)).